Reading from the N-terminus, the 484-residue chain is CUGBP Elav-like family member 2 (484 aa).

Necessary for nuclear export stretches follow at residues 1 to 89 (MNGA…PGMH) and 90 to 178 (HPIQ…EGCS). 3 consecutive RRM domains span residues 16–99 (IKTF…PADS), 108–188 (RKLF…FADT), and 399–477 (ANLF…LKRS). Residues 188–240 (TQKDKEQRRLQQQLAQQMQQLNTATWGNLTGLGGLTPQYLALLQQATSSSNLG) form a necessary for splicing activity region. Residues 347-399 (GLTNGTAGTMDALTQAYSGIQQYAAAALPTLYSQSLLQQQSAAGSQKEGPEGA) form a necessary for nuclear localization region. Positions 426–484 (ISAKVFIDKQTNLSKCFGFVSYDNPVSAQAAIQAMNGFQIGMKRLKVQLKRSKNDSKPY) are necessary for nuclear localization and splicing activity.

The protein belongs to the CELF/BRUNOL family. In terms of tissue distribution, expressed in heart.

It is found in the nucleus. Its subcellular location is the cytoplasm. Its function is as follows. RNA-binding protein implicated in the regulation of several post-transcriptional events. May be involved in mRNA translation repression and stability. Mediates exon inclusion in TNNT2 pre-mRNA. In Gallus gallus (Chicken), this protein is CUGBP Elav-like family member 2 (CELF2).